The primary structure comprises 592 residues: MAAPQITLSVLVIALLTCSVTAYPNGKVPMSCGGMIPQHNHSPQSEPIHQITVSQTTFKPGDQIEVTLSGPPFRGFLLEARDAENLSGPPIGSFTLIDSEESQLLTCTDVQGLAVSHTRSSKKTEIKVYWDAPSPAPDHIRFLATVVQKFKIYWVKIPSPVISQPNAPPFTTPKATTQPLTTPPSVSHLTKPFSAFECGNKKFCVRSPLNCDPEKEPACVFLSFTRDNQSVMVEMSGPSDGYVSFAFSHDQWMGDDDAYLCIREDQTVDIQPSYLTGRSYPVMDSRGTLEDMAWRLADGVIQCSFRRNITLPEAKNRFVLNESYYIFFAEGPSHDGRIFRHSQQPLITYEKYNVTDTPKSVGGSRSSPLLKAHGALMFVAWMTTVSIGVLVARFFRSVWSKAFFLREAAWFQVHRMLMVATSLLTCVAFVLPFVYRGGWSWRAGYHPYLGCTVMTLAVLQPLLATFRPPLHDPRRQVFNWTHWSVGTAARIIAVAAMFLGMDLPGLNLPSPQKTYAMMGFVVWHIGTEVILEIHAYRLSRKVEILDNDRIQILQSLTVAEAEGHVFKKVVLAVYICGNVIFLSIFLSAINHI.

The helical transmembrane segment at 2–22 (AAPQITLSVLVIALLTCSVTA) threads the bilayer. The Reelin domain maps to 13–179 (IALLTCSVTA…FTTPKATTQP (167 aa)). N-linked (GlcNAc...) asparagine glycans are attached at residues asparagine 85, asparagine 308, asparagine 321, and asparagine 353. A DOMON domain is found at 216-331 (EPACVFLSFT…ESYYIFFAEG (116 aa)). Residues 335–534 (DGRIFRHSQQ…IGTEVILEIH (200 aa)) enclose the Cytochrome b561 domain. A helical transmembrane segment spans residues 372 to 392 (AHGALMFVAWMTTVSIGVLVA). Residues histidine 373 and histidine 414 each coordinate heme b. Transmembrane regions (helical) follow at residues 415–435 (RMLM…PFVY), 446–466 (HPYL…LATF), 477–499 (VFNW…AMFL), 515–535 (YAMM…EIHA), and 569–589 (VVLA…LSAI). Heme b contacts are provided by histidine 446 and histidine 482.

Belongs to the FRRS1 family. It depends on heme b as a cofactor. Expressed in spleen, liver and kidney with low expression in brain. Localizes in adult brain to the choroid plexus of the fourth, third, and lateral ventricles and to ependymal cells that line the ventricles.

The protein localises to the membrane. Ferric-chelate reductases reduce Fe(3+) to Fe(2+) before its transport from the endosome to the cytoplasm. The polypeptide is Ferric-chelate reductase 1 (FRRS1) (Mus musculus (Mouse)).